Consider the following 227-residue polypeptide: 2-heptyl-1-hydroxyquinolin-4(1H)-one methyltransferase (227 aa).

It belongs to the methyltransferase superfamily. Monomer.

The protein localises to the cytoplasm. It carries out the reaction 2-heptyl-1-hydroxy-4(1H)-quinolinone + S-adenosyl-L-methionine = 2-heptyl-1-methoxy-4(1H)-quinolinone + S-adenosyl-L-homocysteine + H(+). The enzyme catalyses 3-bromo-2-heptyl-1-hydroxy-4(1H)-quinolinone + S-adenosyl-L-methionine = 3-bromo-2-heptyl-1-methoxy-4(1H)-quinolinone + S-adenosyl-L-homocysteine + H(+). In terms of biological role, involved in cellular response to chemical stress and may contribute to resistance toward antimicrobial natural compounds as well as drugs. Catalyzes the methylation and detoxification of the P.aeruginosa toxin 2-heptyl-1-hydroxy-4(1H)-quinolinone (HQNO) to 2-heptyl-1-methoxy-4(1H)-quinolinone (HMOQ). Can also methylate 3-bromo-2-heptyl-1-hydroxy-4(1H)-quinolinone, and shows much lower activity with 1-hydroxyquinolin-4(1H)-one, quercetin, 4-hydroxyquinolin-2(1H)-one (DHQ) and 4-hydroxyisoquinolin-1(2H)-one. This chain is 2-heptyl-1-hydroxyquinolin-4(1H)-one methyltransferase, found in Mycobacteroides abscessus (strain ATCC 19977 / DSM 44196 / CCUG 20993 / CIP 104536 / JCM 13569 / NCTC 13031 / TMC 1543 / L948) (Mycobacterium abscessus).